The following is a 27-amino-acid chain: Equinin A (27 aa).

Positions 1–13 (AVDKGGGKAEKKD) are enriched in basic and acidic residues. Residues 1–27 (AVDKGGGKAEKKDGNRKKKLAGGEGGG) are disordered.

The protein resides in the secreted. Peptide with unknown function. Does not show antimicrobial and hemolytic activities. The protein is Equinin A of Actinia equina (Beadlet anemone).